A 351-amino-acid chain; its full sequence is Large ribosomal subunit protein uL3 (351 aa).

Disordered stretches follow at residues 1 to 31 and 246 to 271; these read MGHRKLASPRRGSAGLRPRKRSSELLPTPRT and KGSRKIGTRGPSLGTPSYTPQPGQLG.

This sequence belongs to the universal ribosomal protein uL3 family. As to quaternary structure, part of the 50S ribosomal subunit. Forms a cluster with proteins L14 and L24e.

One of the primary rRNA binding proteins, it binds directly near the 3'-end of the 23S rRNA, where it nucleates assembly of the 50S subunit. This is Large ribosomal subunit protein uL3 from Saccharolobus islandicus (strain Y.N.15.51 / Yellowstone #2) (Sulfolobus islandicus).